An 81-amino-acid chain; its full sequence is Protein Vpu (81 aa).

Topologically, residues 1 to 7 are extracellular; that stretch reads MQPSQII. Residues 8–28 traverse the membrane as a helical segment; sequence AIAALVVAAIIAIVVWTIVFI. The Cytoplasmic portion of the chain corresponds to 29–81; it reads EYRRIKRQRKIDCIIDRIRERAEDSGNESEGDREELSKLVEMGHHAPWDIDDL. 2 positions are modified to phosphoserine; by host CK2: Ser-53 and Ser-57.

It belongs to the HIV-1 VPU protein family. In terms of assembly, homopentamer. Interacts with host CD4 and BRTC; these interactions induce proteasomal degradation of CD4. Interacts with host BST2; this interaction leads to the degradation of host BST2. Interacts with host FBXW11. Interacts with host AP1M1; this interaction plays a role in the mistrafficking and subsequent degradation of host BST2. Interacts with host RANBP2; this interaction allows Vpu to down-regulate host BLM sumoylation. In terms of processing, phosphorylated by host CK2. This phosphorylation is necessary for interaction with human BTRC and degradation of CD4.

The protein localises to the host membrane. Its activity is regulated as follows. Ion channel activity is inhibited by hexamethylene amiloride in vitro. In terms of biological role, enhances virion budding by targeting host CD4 and Tetherin/BST2 to proteasome degradation. Degradation of CD4 prevents any unwanted premature interactions between viral Env and its host receptor CD4 in the endoplasmic reticulum. Degradation of antiretroviral protein Tetherin/BST2 is important for virion budding, as BST2 tethers new viral particles to the host cell membrane. Mechanistically, Vpu bridges either CD4 or BST2 to BTRC, a substrate recognition subunit of the Skp1/Cullin/F-box protein E3 ubiquitin ligase, induces their ubiquitination and subsequent proteasomal degradation. The alteration of the E3 ligase specificity by Vpu seems to promote the degradation of host IKBKB, leading to NF-kappa-B down-regulation and subsequent apoptosis. Acts as a viroporin that forms an oligomeric ion channel in membranes. Modulates the host DNA repair mechanisms to promote degradation of nuclear viral cDNA in cells that are already productively infected in order to suppress immune sensing and proviral hyper-integration (superinfection). Manipulates PML-NBs and modulates SUMOylation of host BLM protein thereby enhancing its DNA-end processing activity toward viral unintegrated linear DNA. Also inhibits RAD52-mediated homologous repair of viral cDNA, preventing the generation of dead-end circular forms of single copies of the long terminal repeat and permitting sustained nucleolytic attack. This chain is Protein Vpu, found in Homo sapiens (Human).